The sequence spans 162 residues: 2-C-methyl-D-erythritol 2,4-cyclodiphosphate synthase (162 aa).

Positions 9 and 11 each coordinate a divalent metal cation. 4-CDP-2-C-methyl-D-erythritol 2-phosphate-binding positions include 9-11 and 35-36; these read DVH and HS. An a divalent metal cation-binding site is contributed by histidine 43. Residues 57–59, 62–66, 133–136, phenylalanine 140, and arginine 143 each bind 4-CDP-2-C-methyl-D-erythritol 2-phosphate; these read DIG, FPDTD, and TTTE.

This sequence belongs to the IspF family. Homotrimer. A divalent metal cation serves as cofactor.

The catalysed reaction is 4-CDP-2-C-methyl-D-erythritol 2-phosphate = 2-C-methyl-D-erythritol 2,4-cyclic diphosphate + CMP. Its pathway is isoprenoid biosynthesis; isopentenyl diphosphate biosynthesis via DXP pathway; isopentenyl diphosphate from 1-deoxy-D-xylulose 5-phosphate: step 4/6. Functionally, involved in the biosynthesis of isopentenyl diphosphate (IPP) and dimethylallyl diphosphate (DMAPP), two major building blocks of isoprenoid compounds. Catalyzes the conversion of 4-diphosphocytidyl-2-C-methyl-D-erythritol 2-phosphate (CDP-ME2P) to 2-C-methyl-D-erythritol 2,4-cyclodiphosphate (ME-CPP) with a corresponding release of cytidine 5-monophosphate (CMP). The chain is 2-C-methyl-D-erythritol 2,4-cyclodiphosphate synthase from Histophilus somni (strain 2336) (Haemophilus somnus).